The chain runs to 244 residues: MKNPQKLAITFLPLYVIPTYTLCIKALYKNTHAGLLFSFLGFVLNTPAMSISGPPTTFILYRLHGVRRVLHWTLPDHEQTLYAFTGGSRSMAVKTDARCDTMSGGMIVLQHTHTVTLLTIDCSTDFSSYAFTHRDFHLQDKPHATFAMPFMSWVGSDPTSQLYSNVGGVLSVITEDDLSMCISIVIYGLRVNRPDDQTTPTPTPHQYTSQRRQPETNCPSSPQPAFFTSDDDVLSLILRDAANA.

The interval 193-227 (RPDDQTTPTPTPHQYTSQRRQPETNCPSSPQPAFF) is disordered. Polar residues predominate over residues 205–220 (HQYTSQRRQPETNCPS).

This sequence belongs to the alphaherpesvirinae HHV-1 UL4 family.

It is found in the host nucleus. This Varicella-zoster virus (strain Dumas) (HHV-3) protein is Nuclear protein UL4 homolog.